The following is a 185-amino-acid chain: Ribosome-recycling factor (185 aa).

This sequence belongs to the RRF family.

The protein localises to the cytoplasm. Functionally, responsible for the release of ribosomes from messenger RNA at the termination of protein biosynthesis. May increase the efficiency of translation by recycling ribosomes from one round of translation to another. This Sulfurovum sp. (strain NBC37-1) protein is Ribosome-recycling factor.